The following is a 34-amino-acid chain: Photosystem II reaction center protein Psb30 (34 aa).

Residues valine 6–leucine 26 form a helical membrane-spanning segment.

The protein belongs to the Psb30/Ycf12 family. PSII is composed of 1 copy each of membrane proteins PsbA, PsbB, PsbC, PsbD, PsbE, PsbF, PsbH, PsbI, PsbJ, PsbK, PsbL, PsbM, PsbT, PsbX, PsbY, PsbZ, Psb30/Ycf12, peripheral proteins of the oxygen-evolving complex and a large number of cofactors. It forms dimeric complexes.

The protein localises to the plastid. It localises to the chloroplast thylakoid membrane. Its function is as follows. A core subunit of photosystem II (PSII), probably helps stabilize the reaction center. In Thalassiosira pseudonana (Marine diatom), this protein is Photosystem II reaction center protein Psb30.